Reading from the N-terminus, the 217-residue chain is Probable GTP-binding protein EngB (217 aa).

One can recognise an EngB-type G domain in the interval 44–217; sequence DRVEVCFAGR…TLRSIIAHLE (174 aa). Residues 52–59, 79–83, 97–100, 164–167, and 198–200 contribute to the GTP site; these read GRSNVGKS, GRTQE, DLPG, TKAD, and TSS. Residues Ser59 and Thr81 each contribute to the Mg(2+) site.

The protein belongs to the TRAFAC class TrmE-Era-EngA-EngB-Septin-like GTPase superfamily. EngB GTPase family. The cofactor is Mg(2+).

Functionally, necessary for normal cell division and for the maintenance of normal septation. This is Probable GTP-binding protein EngB from Ruegeria pomeroyi (strain ATCC 700808 / DSM 15171 / DSS-3) (Silicibacter pomeroyi).